The sequence spans 423 residues: Maintenance of mitochondrial morphology protein 1 (423 aa).

At 1–20 (MTIPAPIPDKAESSLSFTQG) the chain is on the lumenal side. Residues 21-41 (LLLGQLSIVILIGAFIKFFIF) form a helical membrane-spanning segment. Over 42 to 423 (GDPPSPDVTA…PGSMPGLSMT (382 aa)) the chain is Cytoplasmic. The region spanning 115 to 327 (QPESLDWFNV…EPRFQQIELP (213 aa)) is the SMP-LTD domain. 2 disordered regions span residues 332–372 (RKKN…KEVE) and 387–423 (SLDV…LSMT). The span at 355 to 372 (RSRDVERDLREEARKEVE) shows a compositional bias: basic and acidic residues.

The protein belongs to the MMM1 family. As to quaternary structure, homodimer. Component of the ER-mitochondria encounter structure (ERMES) or MDM complex, composed of MMM1, MDM10, MDM12 and MDM34. An MMM1 homodimer associates with one molecule of MDM12 on each side in a pairwise head-to-tail manner, and the SMP-LTD domains of MMM1 and MDM12 generate a continuous hydrophobic tunnel for phospholipid trafficking.

It localises to the endoplasmic reticulum membrane. Component of the ERMES/MDM complex, which serves as a molecular tether to connect the endoplasmic reticulum (ER) and mitochondria. Components of this complex are involved in the control of mitochondrial shape and protein biogenesis, and function in nonvesicular lipid trafficking between the ER and mitochondria. The MDM12-MMM1 subcomplex functions in the major beta-barrel assembly pathway that is responsible for biogenesis of all outer membrane beta-barrel proteins, and acts in a late step after the SAM complex. The MDM10-MDM12-MMM1 subcomplex further acts in the TOM40-specific pathway after the action of the MDM12-MMM1 complex. Essential for establishing and maintaining the structure of mitochondria and maintenance of mtDNA nucleoids. The chain is Maintenance of mitochondrial morphology protein 1 from Botryotinia fuckeliana (strain B05.10) (Noble rot fungus).